We begin with the raw amino-acid sequence, 157 residues long: Serine-protein kinase RsbW (157 aa).

It belongs to the anti-sigma-factor family.

The catalysed reaction is L-seryl-[protein] + ATP = O-phospho-L-seryl-[protein] + ADP + H(+). The enzyme catalyses L-threonyl-[protein] + ATP = O-phospho-L-threonyl-[protein] + ADP + H(+). Its function is as follows. Negative regulator of sigma-B activity. Phosphorylates and inactivates its specific antagonist protein, RsbV. Upon phosphorylation of RsbV, RsbW is released and binds to sigma-B, thereby blocking its ability to form an RNA polymerase holoenzyme (E-sigma-B). The chain is Serine-protein kinase RsbW from Listeria monocytogenes serotype 4b (strain CLIP80459).